The primary structure comprises 312 residues: DNA-directed RNA polymerase subunit alpha (312 aa).

Positions 1–226 (MIEFEKPKIT…DHLNLFVDLS (226 aa)) are alpha N-terminal domain (alpha-NTD). The segment at 243–312 (TERVLDKIIE…ELGLSLKKRK (70 aa)) is alpha C-terminal domain (alpha-CTD).

The protein belongs to the RNA polymerase alpha chain family. Homodimer. The RNAP catalytic core consists of 2 alpha, 1 beta, 1 beta' and 1 omega subunit. When a sigma factor is associated with the core the holoenzyme is formed, which can initiate transcription.

The enzyme catalyses RNA(n) + a ribonucleoside 5'-triphosphate = RNA(n+1) + diphosphate. DNA-dependent RNA polymerase catalyzes the transcription of DNA into RNA using the four ribonucleoside triphosphates as substrates. This is DNA-directed RNA polymerase subunit alpha from Lactococcus lactis subsp. cremoris (strain SK11).